The following is a 264-amino-acid chain: Thymidylate synthase (264 aa).

Arginine 21 serves as a coordination point for dUMP. Residue histidine 51 coordinates (6R)-5,10-methylene-5,6,7,8-tetrahydrofolate. Position 126 to 127 (arginine 126 to arginine 127) interacts with dUMP. Residue cysteine 146 is the Nucleophile of the active site. DUMP contacts are provided by residues arginine 166–aspartate 169, asparagine 177, and histidine 207–tyrosine 209. Aspartate 169 is a binding site for (6R)-5,10-methylene-5,6,7,8-tetrahydrofolate. (6R)-5,10-methylene-5,6,7,8-tetrahydrofolate is bound at residue serine 263.

This sequence belongs to the thymidylate synthase family. Bacterial-type ThyA subfamily. In terms of assembly, homodimer.

Its subcellular location is the cytoplasm. It carries out the reaction dUMP + (6R)-5,10-methylene-5,6,7,8-tetrahydrofolate = 7,8-dihydrofolate + dTMP. The protein operates within pyrimidine metabolism; dTTP biosynthesis. Catalyzes the reductive methylation of 2'-deoxyuridine-5'-monophosphate (dUMP) to 2'-deoxythymidine-5'-monophosphate (dTMP) while utilizing 5,10-methylenetetrahydrofolate (mTHF) as the methyl donor and reductant in the reaction, yielding dihydrofolate (DHF) as a by-product. This enzymatic reaction provides an intracellular de novo source of dTMP, an essential precursor for DNA biosynthesis. This Anoxybacillus flavithermus (strain DSM 21510 / WK1) protein is Thymidylate synthase.